We begin with the raw amino-acid sequence, 923 residues long: Periplasmic nitrate reductase (923 aa).

The tat-type signal signal peptide spans 1–30 (MNRRDFIKNTAIASAASVAGLSVPSSMLGA). Residues 34–90 (WKWDKAVCRFCGTGCGIMIARKDGKIVATKGDPAAPVNRGLNCIKGYFNAKIMYGED) enclose the 4Fe-4S Mo/W bis-MGD-type domain. 4 residues coordinate [4Fe-4S] cluster: Cys-41, Cys-44, Cys-48, and Cys-76. Mo-bis(molybdopterin guanine dinucleotide) is bound by residues Lys-78, Gln-146, Asn-171, Cys-175, 208–215 (WGANMAEM), Met-416, Gln-420, Asn-526, 551–552 (SD), Lys-574, Asp-601, and 813–822 (TGRVLEHWHS). Trp-889 contacts substrate. Asn-897 and Lys-914 together coordinate Mo-bis(molybdopterin guanine dinucleotide).

The protein belongs to the prokaryotic molybdopterin-containing oxidoreductase family. NasA/NapA/NarB subfamily. Component of the periplasmic nitrate reductase NapAB complex composed of NapA and NapB. Requires [4Fe-4S] cluster as cofactor. It depends on Mo-bis(molybdopterin guanine dinucleotide) as a cofactor. Predicted to be exported by the Tat system. The position of the signal peptide cleavage has not been experimentally proven.

Its subcellular location is the periplasm. It carries out the reaction 2 Fe(II)-[cytochrome] + nitrate + 2 H(+) = 2 Fe(III)-[cytochrome] + nitrite + H2O. In terms of biological role, catalytic subunit of the periplasmic nitrate reductase complex NapAB. Receives electrons from NapB and catalyzes the reduction of nitrate to nitrite. The polypeptide is Periplasmic nitrate reductase (Campylobacter jejuni subsp. jejuni serotype O:23/36 (strain 81-176)).